Here is an 860-residue protein sequence, read N- to C-terminus: Probable beta-glucosidase A (860 aa).

Residues 1–19 (MRFTSIEAVALTAVSLASA) form the signal peptide. 3 N-linked (GlcNAc...) asparagine glycosylation sites follow: N61, N211, and N252. D280 is an active-site residue. N315, N322, N354, N387, N442, N523, N542, N564, N658, N690, and N712 each carry an N-linked (GlcNAc...) asparagine glycan.

It belongs to the glycosyl hydrolase 3 family.

It localises to the secreted. The enzyme catalyses Hydrolysis of terminal, non-reducing beta-D-glucosyl residues with release of beta-D-glucose.. It participates in glycan metabolism; cellulose degradation. Functionally, beta-glucosidases are one of a number of cellulolytic enzymes involved in the degradation of cellulosic biomass. Catalyzes the last step releasing glucose from the inhibitory cellobiose. The protein is Probable beta-glucosidase A (bglA) of Aspergillus niger (strain ATCC MYA-4892 / CBS 513.88 / FGSC A1513).